A 395-amino-acid polypeptide reads, in one-letter code: Ribose-phosphate pyrophosphokinase 2, chloroplastic (395 aa).

Over residues 1–23 (MASPAPRSLSSSSSSSSSSFCPS) the composition is skewed to low complexity. The interval 1 to 33 (MASPAPRSLSSSSSSSSSSFCPSISPPPRSPSR) is disordered. The N-terminal 42 residues, 1–42 (MASPAPRSLSSSSSSSSSSFCPSISPPPRSPSRASLPFSVKC), are a transit peptide targeting the chloroplast. Mg(2+) is bound by residues D209, H211, D220, and D224. The segment at 295–310 (GKVAVMLDDMIDTAGT) is binding of phosphoribosylpyrophosphate.

This sequence belongs to the ribose-phosphate pyrophosphokinase family.

The protein resides in the plastid. It is found in the chloroplast. It carries out the reaction D-ribose 5-phosphate + ATP = 5-phospho-alpha-D-ribose 1-diphosphate + AMP + H(+). This is Ribose-phosphate pyrophosphokinase 2, chloroplastic (PRS2) from Spinacia oleracea (Spinach).